Consider the following 120-residue polypeptide: UPF0231 protein YacL (120 aa).

This sequence belongs to the UPF0231 family.

This Salmonella agona (strain SL483) protein is UPF0231 protein YacL.